The chain runs to 429 residues: Glucose-6-phosphate isomerase (429 aa).

The active-site Proton donor is the Glu-282. Active-site residues include His-303 and Lys-418.

This sequence belongs to the GPI family.

It localises to the cytoplasm. The catalysed reaction is alpha-D-glucose 6-phosphate = beta-D-fructose 6-phosphate. The protein operates within carbohydrate biosynthesis; gluconeogenesis. It participates in carbohydrate degradation; glycolysis; D-glyceraldehyde 3-phosphate and glycerone phosphate from D-glucose: step 2/4. Functionally, catalyzes the reversible isomerization of glucose-6-phosphate to fructose-6-phosphate. This Mesomycoplasma hyopneumoniae (strain 7448) (Mycoplasma hyopneumoniae) protein is Glucose-6-phosphate isomerase.